An 845-amino-acid chain; its full sequence is uncharacterized protein (845 aa).

Positions 224 to 241 are enriched in polar residues; the sequence is SNNIPTGIQDSSKYTVNG. 7 disordered regions span residues 224-244, 324-346, 383-434, 456-485, 519-619, 674-701, and 739-785; these read SNNIPTGIQDSSKYTVNGPTE, QGTESISFASKNNSAPSADANNG, RTAN…EGSA, VKASNISTEKSKTIAKPKPAKELSPQATLN, NMTL…PKNS, VVSRTVTSPKSGAYASPSKASYNQDSSP, and RKST…ANKS. Basic and acidic residues predominate over residues 390–399; sequence PTKKSNRSEQ. The span at 400-422 shows a compositional bias: polar residues; the sequence is SKTVANTNVGSKNGTTPRSFAQK. Positions 534–546 are enriched in basic and acidic residues; that stretch reads NSWRSKYLSEGKN. Residues 563-576 are compositionally biased toward low complexity; the sequence is SSLASPTKSSASPL. Residue serine 567 is modified to Phosphoserine. 2 stretches are compositionally biased toward basic and acidic residues: residues 579-588 and 600-614; these read APKETPERLC and ANLKESELPKEKSDI. Polar residues-rich tracts occupy residues 674 to 683, 691 to 701, and 743 to 760; these read VVSRTVTSPK, SKASYNQDSSP, and ADSLSSPKRQSVPSTPKA.

The protein resides in the mitochondrion. This is an uncharacterized protein from Schizosaccharomyces pombe (strain 972 / ATCC 24843) (Fission yeast).